The chain runs to 546 residues: 2-isopropylmalate synthase (546 aa).

The 264-residue stretch at 8 to 271 (ILIFDTTLRD…NSFFGRSSDS (264 aa)) folds into the Pyruvate carboxyltransferase domain. Residues Asp-17, His-208, His-210, and Asn-244 each contribute to the Mn(2+) site. The segment at 408-546 (QLSHVQVSCG…EKKVFSNPKN (139 aa)) is regulatory domain.

It belongs to the alpha-IPM synthase/homocitrate synthase family. LeuA type 1 subfamily. Homodimer. It depends on Mn(2+) as a cofactor.

The protein localises to the cytoplasm. The catalysed reaction is 3-methyl-2-oxobutanoate + acetyl-CoA + H2O = (2S)-2-isopropylmalate + CoA + H(+). The protein operates within amino-acid biosynthesis; L-leucine biosynthesis; L-leucine from 3-methyl-2-oxobutanoate: step 1/4. In terms of biological role, catalyzes the condensation of the acetyl group of acetyl-CoA with 3-methyl-2-oxobutanoate (2-ketoisovalerate) to form 3-carboxy-3-hydroxy-4-methylpentanoate (2-isopropylmalate). The polypeptide is 2-isopropylmalate synthase (Prochlorococcus marinus (strain MIT 9515)).